A 338-amino-acid polypeptide reads, in one-letter code: Lumican (338 aa).

The N-terminal stretch at 1–18 (MSLSAFTLFLALIGGTSG) is a signal peptide. Q19 carries the pyrrolidone carboxylic acid modification. Sulfotyrosine occurs at positions 20, 21, 23, and 30. The 39-residue stretch at 28–66 (SIYGQSSPNCAPECNCPESYPSAMYCDELKLKSVPMVPP) folds into the LRRNT domain. LRR repeat units follow at residues 67-88 (GIKYLYLRNNQIDHIDEKAFEN), 91-114 (DLQWLILDHNLLENSKIKGRVFSK), 117-137 (QLKKLHINHNNLTESVGPLPK), 138-159 (SLEDLQLTHNKITKLGSFEGLV), 160-181 (NLTFIHLQHNRLKEDAVSAAFK), 185-205 (SLEYLDLSFNQIARLPSGLPV), 206-227 (SLLTLYLDNNKISNIPDEYFKR), 230-253 (ALQYLRLSHNELADSGIPGNSFNV), 255-276 (SLVELDLSYNKLKNIPTVNENL), and 277-296 (ENYYLEVNQLEKFDIKSFCK). An N-linked (GlcNAc...) (keratan sulfate) asparagine glycan is attached at N88. N127 carries N-linked (GlcNAc...) (keratan sulfate) asparagine glycosylation. N160 carries N-linked (GlcNAc...) (keratan sulfate) asparagine glycosylation. N252 is a glycosylation site (N-linked (GlcNAc...) (keratan sulfate) asparagine). Residues C295 and C328 are joined by a disulfide bond. Phosphoserine is present on S304. The stretch at 305–326 (KIKHLRLDGNRISETSLPPDMY) is one LRR 11 repeat.

The protein belongs to the small leucine-rich proteoglycan (SLRP) family. SLRP class II subfamily. In terms of assembly, binds to laminin. In terms of processing, sulfated on tyrosine residue(s). Post-translationally, contains keratan sulfate. As to expression, cornea and other tissues.

The protein localises to the secreted. The protein resides in the extracellular space. Its subcellular location is the extracellular matrix. The protein is Lumican (LUM) of Homo sapiens (Human).